Here is an 845-residue protein sequence, read N- to C-terminus: Alanine--tRNA ligase (845 aa).

Zn(2+) contacts are provided by histidine 552, histidine 556, cysteine 653, and histidine 657.

This sequence belongs to the class-II aminoacyl-tRNA synthetase family. Requires Zn(2+) as cofactor.

It is found in the cytoplasm. It catalyses the reaction tRNA(Ala) + L-alanine + ATP = L-alanyl-tRNA(Ala) + AMP + diphosphate. Its function is as follows. Catalyzes the attachment of alanine to tRNA(Ala) in a two-step reaction: alanine is first activated by ATP to form Ala-AMP and then transferred to the acceptor end of tRNA(Ala). Also edits incorrectly charged Ser-tRNA(Ala) and Gly-tRNA(Ala) via its editing domain. The polypeptide is Alanine--tRNA ligase (Campylobacter fetus subsp. fetus (strain 82-40)).